The primary structure comprises 562 residues: Arginine--tRNA ligase (562 aa).

Positions 122-132 (PNIAKDMHVGH) match the 'HIGH' region motif.

The protein belongs to the class-I aminoacyl-tRNA synthetase family. Monomer.

The protein localises to the cytoplasm. It catalyses the reaction tRNA(Arg) + L-arginine + ATP = L-arginyl-tRNA(Arg) + AMP + diphosphate. This is Arginine--tRNA ligase from Chlamydia abortus (strain DSM 27085 / S26/3) (Chlamydophila abortus).